Consider the following 214-residue polypeptide: tRNA (guanine-N(7)-)-methyltransferase (214 aa).

Positions 44, 69, 96, and 118 each coordinate S-adenosyl-L-methionine. D118 is an active-site residue. A substrate-binding site is contributed by K122. Residues 124 to 129 are interaction with RNA; the sequence is RHEKRR. Residues D154 and 192-195 each bind substrate; that span reads TEYE.

The protein belongs to the class I-like SAM-binding methyltransferase superfamily. TrmB family.

The catalysed reaction is guanosine(46) in tRNA + S-adenosyl-L-methionine = N(7)-methylguanosine(46) in tRNA + S-adenosyl-L-homocysteine. It participates in tRNA modification; N(7)-methylguanine-tRNA biosynthesis. Its function is as follows. Catalyzes the formation of N(7)-methylguanine at position 46 (m7G46) in tRNA. The sequence is that of tRNA (guanine-N(7)-)-methyltransferase from Lactiplantibacillus plantarum (strain ATCC BAA-793 / NCIMB 8826 / WCFS1) (Lactobacillus plantarum).